The following is a 505-amino-acid chain: MAKPILLSIYLCLIIVALFNGCLAQSGGRQQHKFGQCQLNRLDALEPTNRIEAEAGVIESWDPNHQQLQCAGVAVVRRTIEPNGLLLPHYSNAPQLVYIARGRGITGVLFPGCPETFEESQRQSQQGQRREFQQDRHQKIRHFREGDIIAFPAGVAHWCYNDGSSPVVAIFLLDTHNNANQLDQNPRNFYLAGNPDDEFRPQGQQEYEQHRRQQQHQQRRGEHGEQQRDLGNNVFSGFDAEFLADAFNVDTETARRLQSENDHRGSIVRVEGRQLQVIRPRWSREEQEHEERKERERERESESERRQSRRGGRDDNGLEETICTLSLRENIGDPSRADIYTEEAGRISTVNSHNLPILRWLQLSAERGALYSDALYVPHWNLNAHSVVYALRGRAEVQVVDNFGQTVFDDELREGQLLTIPQNFAVVKRARDEGFEWVSFKTNENAMVSPLAGRTSAIRALPEEVLVNAFQIPREDARRLKFNRQESTLVRSRSRSSRSERRAEV.

An N-terminal signal peptide occupies residues 1–24; the sequence is MAKPILLSIYLCLIIVALFNGCLA. Cystine bridges form between cysteine 37–cysteine 70 and cysteine 113–cysteine 323. The Cupin type-1 1 domain occupies 42 to 255; that stretch reads LDALEPTNRI…AFNVDTETAR (214 aa). IgE-binding regions lie at residues 118–132, 208–219, and 238–249; these read EESQRQSQQGQRREF, EQHRRQQQHQQR, and FDAEFLADAFNV. Positions 193–232 are disordered; sequence GNPDDEFRPQGQQEYEQHRRQQQHQQRRGEHGEQQRDLGN. Positions 219-228 are enriched in basic and acidic residues; that stretch reads RRGEHGEQQR. Residues 282–316 are compositionally biased toward basic and acidic residues; the sequence is WSREEQEHEERKERERERESESERRQSRRGGRDDN. Residues 282 to 318 are disordered; sequence WSREEQEHEERKERERERESESERRQSRRGGRDDNGL. The NGXEET; peptidase recognition motif signature appears at 316 to 321; sequence NGLEET. The Cupin type-1 2 domain maps to 329–478; the sequence is ENIGDPSRAD…AFQIPREDAR (150 aa).

It belongs to the 11S seed storage protein (globulins) family. As to quaternary structure, homohexamer. Each subunit is composed of an acidic and a basic chain derived from a single precursor and linked by a disulfide bond. Expressed in seeds (at protein level). Expressed in seeds.

Its function is as follows. Seed storage protein. This is 11S globulin seed storage protein 1 from Carya illinoinensis (Pecan).